We begin with the raw amino-acid sequence, 237 residues long: Methylthioribulose-1-phosphate dehydratase (237 aa).

Residue Cys98 participates in substrate binding. Zn(2+)-binding residues include His116 and His118. The Proton donor/acceptor role is filled by Glu140. His196 is a binding site for Zn(2+).

It belongs to the aldolase class II family. MtnB subfamily. Requires Zn(2+) as cofactor.

The protein resides in the cytoplasm. The catalysed reaction is 5-(methylsulfanyl)-D-ribulose 1-phosphate = 5-methylsulfanyl-2,3-dioxopentyl phosphate + H2O. Its pathway is amino-acid biosynthesis; L-methionine biosynthesis via salvage pathway; L-methionine from S-methyl-5-thio-alpha-D-ribose 1-phosphate: step 2/6. In terms of biological role, catalyzes the dehydration of methylthioribulose-1-phosphate (MTRu-1-P) into 2,3-diketo-5-methylthiopentyl-1-phosphate (DK-MTP-1-P). The polypeptide is Methylthioribulose-1-phosphate dehydratase (Laccaria bicolor (strain S238N-H82 / ATCC MYA-4686) (Bicoloured deceiver)).